The following is a 274-amino-acid chain: Imidazole glycerol phosphate synthase subunit HisF (274 aa).

Catalysis depends on residues D11 and D134.

This sequence belongs to the HisA/HisF family. In terms of assembly, heterodimer of HisH and HisF.

The protein localises to the cytoplasm. It catalyses the reaction 5-[(5-phospho-1-deoxy-D-ribulos-1-ylimino)methylamino]-1-(5-phospho-beta-D-ribosyl)imidazole-4-carboxamide + L-glutamine = D-erythro-1-(imidazol-4-yl)glycerol 3-phosphate + 5-amino-1-(5-phospho-beta-D-ribosyl)imidazole-4-carboxamide + L-glutamate + H(+). It participates in amino-acid biosynthesis; L-histidine biosynthesis; L-histidine from 5-phospho-alpha-D-ribose 1-diphosphate: step 5/9. IGPS catalyzes the conversion of PRFAR and glutamine to IGP, AICAR and glutamate. The HisF subunit catalyzes the cyclization activity that produces IGP and AICAR from PRFAR using the ammonia provided by the HisH subunit. In Methanosphaera stadtmanae (strain ATCC 43021 / DSM 3091 / JCM 11832 / MCB-3), this protein is Imidazole glycerol phosphate synthase subunit HisF.